Consider the following 154-residue polypeptide: Nuclear cap-binding protein subunit 2 (154 aa).

MRNA is bound by residues Tyr-10, Tyr-33, Arg-102 to Asp-106, Arg-113 to Arg-117, and Gln-123 to Val-124. The RRM domain occupies Cys-30–Gly-108.

The protein belongs to the RRM NCBP2 family. As to quaternary structure, component of the nuclear cap-binding complex (CBC), a heterodimer composed of Cbp80 and Cbp20 that interacts with m7GpppG-capped RNA. Interacts with Ars2.

It localises to the nucleus. Component of the cap-binding complex (CBC), which binds co-transcriptionally to the 5' cap of pre-mRNAs and is involved in various processes such as pre-mRNA splicing and RNA-mediated gene silencing (RNAi). The CBC complex is involved in miRNA-mediated RNA interference via its interaction with Ars2 and is required for primary microRNAs (miRNAs) processing. Also involved in innate immunity via the short interfering RNAs (siRNAs) processing machinery by restricting the viral RNA production. In the CBC complex, Cbp20 recognizes and binds capped RNAs (m7GpppG-capped RNA) but requires Cbp80 to stabilize the movement of its N-terminal loop and lock the CBC into a high affinity cap-binding state with the cap structure. The protein is Nuclear cap-binding protein subunit 2 (Cbp20) of Drosophila erecta (Fruit fly).